The primary structure comprises 394 residues: Penicillopepsin-2 (394 aa).

The first 20 residues, 1-20, serve as a signal peptide directing secretion; that stretch reads MVVFSKITVVLAGLATVASA. The propeptide at 21-71 is activation peptide; it reads VPTGTSRKSTFTVNQKARPVAQAKAINLPGMYASALSKYGAAVPASVKAAA. One can recognise a Peptidase A1 domain in the interval 87–391; that stretch reads YLTPVNVGGT…DANGPRLGFA (305 aa). The active site involves D103. N-linked (GlcNAc...) asparagine glycosylation occurs at N132. The active site involves D283. C319 and C354 form a disulfide bridge.

It belongs to the peptidase A1 family. Monomer.

It localises to the secreted. It carries out the reaction Hydrolysis of proteins with broad specificity similar to that of pepsin A, preferring hydrophobic residues at P1 and P1', but also cleaving 20-Gly-|-Glu-21 in the B chain of insulin. Clots milk, and activates trypsinogen.. Its function is as follows. Secreted aspartic endopeptidase that allows assimilation of proteinaceous substrates. The scissile peptide bond is attacked by a nucleophilic water molecule activated by two aspartic residues in the active site. Shows a broad primary substrate specificity. Favors hydrophobic residues at the P1 and P1' positions, but can also activate trypsinogen and hydrolyze the B chain of insulin between positions 'Gly-20' and 'Glu-21'. In Penicillium janthinellum (Penicillium vitale), this protein is Penicillopepsin-2.